The primary structure comprises 116 residues: uncharacterized protein (116 aa).

The segment at 1 to 72 adopts a CHY-type zinc-finger fold; that stretch reads MCKHVLNAQV…SDEYCPNCDN (72 aa). Zn(2+) contacts are provided by Cys2, His4, Cys16, Cys17, Cys23, Cys26, His27, His33, Cys45, Cys48, Cys67, and Cys70.

Its subcellular location is the cytoplasm. This is an uncharacterized protein from Schizosaccharomyces pombe (strain 972 / ATCC 24843) (Fission yeast).